The primary structure comprises 62 residues: DNA-binding protein 7b (62 aa).

Belongs to the 7 kDa DNA-binding/endoribonuclease P2 family. In terms of assembly, monomer.

It is found in the cytoplasm. Can constrain negative DNA supercoils. May be involved in maintaining the integrity of the genome at high temperature. The protein is DNA-binding protein 7b of Acidianus hospitalis (strain W1).